Here is a 280-residue protein sequence, read N- to C-terminus: Energy-coupling factor transporter ATP-binding protein EcfA2 (280 aa).

In terms of domain architecture, ABC transporter spans 3–245; the sequence is IEFKNVSYTY…VELLESKQLG (243 aa). ATP is bound at residue 40–47; the sequence is GHTGSGKS.

Belongs to the ABC transporter superfamily. Energy-coupling factor EcfA family. In terms of assembly, forms a stable energy-coupling factor (ECF) transporter complex composed of 2 membrane-embedded substrate-binding proteins (S component), 2 ATP-binding proteins (A component) and 2 transmembrane proteins (T component).

It localises to the cell membrane. ATP-binding (A) component of a common energy-coupling factor (ECF) ABC-transporter complex. Unlike classic ABC transporters this ECF transporter provides the energy necessary to transport a number of different substrates. The sequence is that of Energy-coupling factor transporter ATP-binding protein EcfA2 from Streptococcus agalactiae serotype Ia (strain ATCC 27591 / A909 / CDC SS700).